The chain runs to 444 residues: Pre-mRNA-splicing factor cwc25 (444 aa).

Disordered regions lie at residues 1–27 (MGSG…QKAE), 168–385 (LASM…TDLD), and 397–425 (EAER…GFMS). A coiled-coil region spans residues 19-65 (NVAATQKAEAEAIAERKKLQQRLQEIEEERRKEEIQKALEAAGGKRK). Over residues 186–199 (QRRHKHRSHHHRSD) the composition is skewed to basic residues. 2 stretches are compositionally biased toward basic and acidic residues: residues 200–220 (RHRD…DRDR) and 228–281 (DSRD…DDRS). Basic residues predominate over residues 282-293 (RRHRFPQGRSRS). Basic and acidic residues-rich tracts occupy residues 305 to 344 (RREY…EQPK), 360 to 372 (DGDH…ERAK), and 397 to 410 (EAER…EKAR). Residues 364–417 (KNAEEERAKKLAAMQAAATDLDKAREERLKALAEAERAEREADEKARQQNKKFR) adopt a coiled-coil conformation.

The protein belongs to the CWC25 family. As to quaternary structure, associated with the spliceosome.

It localises to the nucleus. Involved in pre-mRNA splicing. The protein is Pre-mRNA-splicing factor cwc25 (msp-6) of Neurospora crassa (strain ATCC 24698 / 74-OR23-1A / CBS 708.71 / DSM 1257 / FGSC 987).